Here is a 207-residue protein sequence, read N- to C-terminus: Ribosomal RNA large subunit methyltransferase E (207 aa).

Gly60, Trp62, Asp80, Asp96, and Asp121 together coordinate S-adenosyl-L-methionine. The Proton acceptor role is filled by Lys161.

Belongs to the class I-like SAM-binding methyltransferase superfamily. RNA methyltransferase RlmE family.

It localises to the cytoplasm. The enzyme catalyses uridine(2552) in 23S rRNA + S-adenosyl-L-methionine = 2'-O-methyluridine(2552) in 23S rRNA + S-adenosyl-L-homocysteine + H(+). In terms of biological role, specifically methylates the uridine in position 2552 of 23S rRNA at the 2'-O position of the ribose in the fully assembled 50S ribosomal subunit. In Pseudomonas aeruginosa (strain UCBPP-PA14), this protein is Ribosomal RNA large subunit methyltransferase E.